We begin with the raw amino-acid sequence, 63 residues long: Large ribosomal subunit protein uL29 (63 aa).

It belongs to the universal ribosomal protein uL29 family.

The polypeptide is Large ribosomal subunit protein uL29 (Bdellovibrio bacteriovorus (strain ATCC 15356 / DSM 50701 / NCIMB 9529 / HD100)).